A 330-amino-acid polypeptide reads, in one-letter code: Beta-ketoacyl-[acyl-carrier-protein] synthase III (330 aa).

Active-site residues include cysteine 115 and histidine 255. Positions 256-260 (QANFR) are ACP-binding. The active site involves asparagine 285.

Belongs to the thiolase-like superfamily. FabH family. Homodimer.

It is found in the cytoplasm. The enzyme catalyses malonyl-[ACP] + acetyl-CoA + H(+) = 3-oxobutanoyl-[ACP] + CO2 + CoA. The protein operates within lipid metabolism; fatty acid biosynthesis. Catalyzes the condensation reaction of fatty acid synthesis by the addition to an acyl acceptor of two carbons from malonyl-ACP. Catalyzes the first condensation reaction which initiates fatty acid synthesis and may therefore play a role in governing the total rate of fatty acid production. Possesses both acetoacetyl-ACP synthase and acetyl transacylase activities. Its substrate specificity determines the biosynthesis of branched-chain and/or straight-chain of fatty acids. The protein is Beta-ketoacyl-[acyl-carrier-protein] synthase III of Helicobacter pylori (strain G27).